The sequence spans 1406 residues: Inactive tyrosine-protein kinase PRAG1 (1406 aa).

Position 148 is a phosphoserine (Ser148). Positions 184–193 (EEKAVHKEKP) are enriched in basic and acidic residues. 2 disordered regions span residues 184-205 (EEKAVHKEKPSFPYQDRPSTQE) and 217-248 (TTSGCHQGPGPLRESLPSEDDSDQRCSPSGDS). Residues Tyr253, Tyr365, and Tyr413 each carry the phosphotyrosine modification. Disordered stretches follow at residues 372–470 (PAPE…TPQV) and 484–854 (DHRT…HSET). Residues 526–542 (RESHAHSASESKPKERP) show a composition bias toward basic and acidic residues. The segment covering 546 to 576 (PKLSKSSPVGSPVSPSAGGPPVSPLADLSDG) has biased composition (low complexity). 2 stretches are compositionally biased toward polar residues: residues 660–671 (NGPTDHSNSTTW) and 678–695 (DGSSGQNSKVGTGMSKSA). A phosphoserine mark is found at Ser696 and Ser745. 2 stretches are compositionally biased toward polar residues: residues 737-746 (SQGSAESLSP) and 754-770 (SFTTGSTDSLASDSRTC). At Ser782 the chain carries Phosphoserine. Residues 798–808 (SGSTEDVSPSG) show a composition bias toward polar residues. Ser826 carries the phosphoserine modification. The required for homodimerization stretch occupies residues 933–976 (STQLQLHGLLSNISSKEGTYAKLGGLYTQSLARLVAKCEDLFMG). The Protein kinase domain maps to 978 to 1329 (QKKELHFNEN…EAKRVLQCLL (352 aa)). Pro residues predominate over residues 1163–1173 (GPAPAPAPAPA). Residues 1163-1206 (GPAPAPAPAPAPAAAAPPCSSAAPPAGGTLSPAAGPASPEGPRE) are disordered. The span at 1174 to 1202 (PAAAAPPCSSAAPPAGGTLSPAAGPASPE) shows a compositional bias: low complexity. The tract at residues 1331 to 1406 (GPRRELVQQP…LQSLKLLQLL (76 aa)) is required for homodimerization.

It belongs to the protein kinase superfamily. As to quaternary structure, homodimer. Dimerization leads to the catalytic activation of CSK. Interacts (via C-terminus) with RND2. Interacts with CSK (via SH2 domain) in a Tyr-413 phosphorylation-dependent manner; this interaction potentiates kinase activity of CSK. Interacts with PEAK1. Interacts with NOTCH1 intracellular domain (N1ICD). Forms a complex with N1ICD and MAML1, in a MAML1-dependent manner. Phosphorylated by CSK on Tyr-253, Tyr-365, and Tyr-413; Tyr-413 is a primary site of phosphorylation.

The protein resides in the cytoplasm. It localises to the cell junction. Its subcellular location is the focal adhesion. The protein localises to the nucleus. Functionally, catalytically inactive protein kinase that acts as a scaffold protein. Functions as an effector of the small GTPase RND2, which stimulates RhoA activity and inhibits NGF-induced neurite outgrowth. Promotes Src family kinase (SFK) signaling by regulating the subcellular localization of CSK, a negative regulator of these kinases, leading to the regulation of cell morphology and motility by a CSK-dependent mechanism. Acts as a critical coactivator of Notch signaling. This Homo sapiens (Human) protein is Inactive tyrosine-protein kinase PRAG1.